Consider the following 396-residue polypeptide: 1-deoxy-D-xylulose 5-phosphate reductoisomerase (396 aa).

Positions 15, 16, 17, 18, 41, and 129 each coordinate NADPH. A 1-deoxy-D-xylulose 5-phosphate-binding site is contributed by lysine 130. Residue glutamate 131 participates in NADPH binding. Residue aspartate 155 participates in Mn(2+) binding. Positions 156, 157, 182, and 205 each coordinate 1-deoxy-D-xylulose 5-phosphate. Glutamate 157 serves as a coordination point for Mn(2+). Glycine 211 contacts NADPH. 4 residues coordinate 1-deoxy-D-xylulose 5-phosphate: serine 218, asparagine 223, lysine 224, and glutamate 227. Glutamate 227 serves as a coordination point for Mn(2+).

Belongs to the DXR family. It depends on Mg(2+) as a cofactor. Requires Mn(2+) as cofactor.

It catalyses the reaction 2-C-methyl-D-erythritol 4-phosphate + NADP(+) = 1-deoxy-D-xylulose 5-phosphate + NADPH + H(+). It participates in isoprenoid biosynthesis; isopentenyl diphosphate biosynthesis via DXP pathway; isopentenyl diphosphate from 1-deoxy-D-xylulose 5-phosphate: step 1/6. Functionally, catalyzes the NADPH-dependent rearrangement and reduction of 1-deoxy-D-xylulose-5-phosphate (DXP) to 2-C-methyl-D-erythritol 4-phosphate (MEP). This Xanthomonas campestris pv. campestris (strain 8004) protein is 1-deoxy-D-xylulose 5-phosphate reductoisomerase.